The chain runs to 711 residues: Hydroperoxide isomerase ALOXE3 (711 aa).

In terms of domain architecture, PLAT spans 2 to 119 (AVYRLCVTTG…TVELRPGTAR (118 aa)). A Lipoxygenase domain is found at 120–711 (TICQDSLPLL…PPLIENSVSI (592 aa)). Residues histidine 408, histidine 413, histidine 588, asparagine 592, and isoleucine 711 each contribute to the Fe cation site.

Belongs to the lipoxygenase family. Requires Fe cation as cofactor. As to expression, skin specific.

The protein localises to the cytoplasm. It carries out the reaction a hydroperoxyeicosatetraenoate = a hydroxy-epoxy-eicosatetraenoate. It catalyses the reaction (8S)-hydroperoxy-(5Z,9E,11Z,14Z)-eicosatetraenoate = (10R)-hydroxy-(8S,9S)-epoxy-(5Z,11Z,14Z)-eicosatrienoate. The catalysed reaction is (12R)-hydroperoxy-(5Z,8Z,10E,14Z)-eicosatetraenoate = (8R)-hydroxy-(11R,12R)-epoxy-(5Z,9E,14Z)-eicosatrienoate. The enzyme catalyses (12S)-hydroperoxy-(5Z,8Z,10E,14Z)-eicosatetraenoate = (8R)-hydroxy-(11S,12S)-epoxy-(5Z,9E,14Z)-eicosatrienoate. It carries out the reaction (12S)-hydroperoxy-(5Z,8Z,10E,14Z)-eicosatetraenoate = (10R)-hydroxy-(11S,12S)-epoxy-(5Z,8Z,14Z)-eicosatrienoate. It catalyses the reaction (15S)-hydroperoxy-(5Z,8Z,11Z,13E)-eicosatetraenoate = (13R)-hydroxy-(14S,15S)-epoxy-(5Z,8Z,11Z)-eicosatrienoate. The catalysed reaction is (13S)-hydroperoxy-(9Z,11E)-octadecadienoate = 11-hydroxy-(12S,13S)-epoxy-(9Z)-octadecenoate. The enzyme catalyses (5S)-hydroperoxy-(6E,8Z,11Z,14Z)-eicosatetraenoate = 7R-hydroxy-5S,6S-epoxy-(8Z,11Z,14Z)-eicosatrienoate. It carries out the reaction N-[omega-(9R)-hydroperoxy-(10E,12Z)-octadecadienoyloxy]acyl-beta-D-glucosyl-(1&lt;-&gt;1)-octadecasphing-4E-enine = a N-[omega-(9R,10R)-epoxy-(13R)-hydroxy-(11E)-octadecenoyloxy]acyl-beta-D-glucosyl-(1&lt;-&gt;1)-sphing-4E-enine. It catalyses the reaction a N-[omega-(9R)-hydroperoxy-(10E,12Z)-octadecadienoyloxy]-acylsphin-4E-enine = a N-[omega-(9R,10R)-epoxy-(13R)-hydroxy-(11E)-octadecenoyloxy]-acylsphing-4E-enine. The catalysed reaction is a hydroperoxyeicosatetraenoate = an oxoeicosatetraenoate + H2O. The enzyme catalyses (8R)-hydroperoxy-(5Z,9E,11Z,14Z)-eicosatetraenoate = 8-oxo-(5Z,9E,11Z,14Z)-eicosatetraenoate + H2O. It carries out the reaction (8S)-hydroperoxy-(5Z,9E,11Z,14Z)-eicosatetraenoate = 8-oxo-(5Z,9E,11Z,14Z)-eicosatetraenoate + H2O. It catalyses the reaction (12R)-hydroperoxy-(5Z,8Z,10E,14Z)-eicosatetraenoate = 12-oxo-(5Z,8Z,10E,14Z)-eicosatetraenoate + H2O. The catalysed reaction is (12S)-hydroperoxy-(5Z,8Z,10E,14Z)-eicosatetraenoate = 12-oxo-(5Z,8Z,10E,14Z)-eicosatetraenoate + H2O. The enzyme catalyses (15S)-hydroperoxy-(5Z,8Z,11Z,13E)-eicosatetraenoate = 15-oxo-(5Z,8Z,11Z,13E)-eicosatetraenoate + H2O. It carries out the reaction (13S)-hydroperoxy-(9Z,11E)-octadecadienoate = 13-oxo-(9Z,11E)-octadecadienoate + H2O. It functions in the pathway lipid metabolism; hydroperoxy eicosatetraenoic acid biosynthesis. It participates in lipid metabolism; sphingolipid metabolism. Its function is as follows. Non-heme iron-containing lipoxygenase which is atypical in that it displays a prominent hydroperoxide isomerase activity and a reduced lipoxygenases activity. The hydroperoxide isomerase activity catalyzes the isomerization of hydroperoxides, derived from arachidonic and linoleic acid by ALOX12B, into hepoxilin-type epoxyalcohols and ketones. In presence of oxygen, oxygenates polyunsaturated fatty acids, including arachidonic acid, to produce fatty acid hydroperoxides. In the skin, acts downstream of ALOX12B on the linoleate moiety of esterified omega-hydroxyacyl-sphingosine (EOS) ceramides to produce an epoxy-ketone derivative, a crucial step in the conjugation of omega-hydroxyceramide to membrane proteins. Therefore plays a crucial role in the synthesis of corneocytes lipid envelope and the establishment of the skin barrier to water loss. In parallel, it may have a signaling function in barrier formation through the production of hepoxilins metabolites. Also plays a role in adipocyte differentiation through hepoxilin A3 and hepoxilin B3 production which in turn activate PPARG. Through the production of hepoxilins in the spinal cord, it may regulate inflammatory tactile allodynia. This chain is Hydroperoxide isomerase ALOXE3, found in Mus musculus (Mouse).